Reading from the N-terminus, the 344-residue chain is Selenide, water dikinase (344 aa).

Cys-16 is an active-site residue. ATP is bound by residues Lys-19 and Ser-47 to Asp-49. Asp-50 lines the Mg(2+) pocket. ATP-binding positions include Asp-67, Asp-90, and Gly-138 to Ser-140. Asp-90 serves as a coordination point for Mg(2+). Position 226 (Asp-226) interacts with Mg(2+).

The protein belongs to the selenophosphate synthase 1 family. Class I subfamily. Homodimer. It depends on Mg(2+) as a cofactor.

It carries out the reaction hydrogenselenide + ATP + H2O = selenophosphate + AMP + phosphate + 2 H(+). Functionally, synthesizes selenophosphate from selenide and ATP. The polypeptide is Selenide, water dikinase (Pseudomonas putida (strain ATCC 47054 / DSM 6125 / CFBP 8728 / NCIMB 11950 / KT2440)).